The chain runs to 68 residues: Toxin Cg2 (68 aa).

In terms of domain architecture, LCN-type CS-alpha/beta spans 1–66; that stretch reads KDGYLVNKST…VYPIPGKTCS (66 aa). 4 cysteine pairs are disulfide-bonded: C12–C65, C16–C41, C25–C46, and C29–C48.

Belongs to the long (4 C-C) scorpion toxin superfamily. Sodium channel inhibitor family. In terms of tissue distribution, expressed by the venom gland.

Its subcellular location is the secreted. Binds to sodium channels (Nav) and inhibits them. The protein is Toxin Cg2 of Centruroides gracilis (Slenderbrown scorpion).